The chain runs to 89 residues: Small ribosomal subunit protein uS15 (89 aa).

This sequence belongs to the universal ribosomal protein uS15 family. In terms of assembly, part of the 30S ribosomal subunit. Forms a bridge to the 50S subunit in the 70S ribosome, contacting the 23S rRNA.

Functionally, one of the primary rRNA binding proteins, it binds directly to 16S rRNA where it helps nucleate assembly of the platform of the 30S subunit by binding and bridging several RNA helices of the 16S rRNA. In terms of biological role, forms an intersubunit bridge (bridge B4) with the 23S rRNA of the 50S subunit in the ribosome. The chain is Small ribosomal subunit protein uS15 from Streptococcus pyogenes serotype M1.